A 171-amino-acid polypeptide reads, in one-letter code: 3-hydroxydecanoyl-[acyl-carrier-protein] dehydratase (171 aa).

H70 is an active-site residue.

The protein belongs to the thioester dehydratase family. FabA subfamily. As to quaternary structure, homodimer.

Its subcellular location is the cytoplasm. The catalysed reaction is a (3R)-hydroxyacyl-[ACP] = a (2E)-enoyl-[ACP] + H2O. The enzyme catalyses (3R)-hydroxydecanoyl-[ACP] = (2E)-decenoyl-[ACP] + H2O. It catalyses the reaction (2E)-decenoyl-[ACP] = (3Z)-decenoyl-[ACP]. The protein operates within lipid metabolism; fatty acid biosynthesis. Its function is as follows. Necessary for the introduction of cis unsaturation into fatty acids. Catalyzes the dehydration of (3R)-3-hydroxydecanoyl-ACP to E-(2)-decenoyl-ACP and then its isomerization to Z-(3)-decenoyl-ACP. Can catalyze the dehydratase reaction for beta-hydroxyacyl-ACPs with saturated chain lengths up to 16:0, being most active on intermediate chain length. The polypeptide is 3-hydroxydecanoyl-[acyl-carrier-protein] dehydratase (Shewanella denitrificans (strain OS217 / ATCC BAA-1090 / DSM 15013)).